Here is a 94-residue protein sequence, read N- to C-terminus: UPF0213 protein BH0048 (94 aa).

The GIY-YIG domain maps to 1–76; the sequence is MNHYVYILEC…KHLSRRKKEQ (76 aa).

The protein belongs to the UPF0213 family.

The sequence is that of UPF0213 protein BH0048 from Halalkalibacterium halodurans (strain ATCC BAA-125 / DSM 18197 / FERM 7344 / JCM 9153 / C-125) (Bacillus halodurans).